Here is a 409-residue protein sequence, read N- to C-terminus: Arginine deiminase (409 aa).

The active-site Amidino-cysteine intermediate is C399.

Belongs to the arginine deiminase family.

It is found in the cytoplasm. It carries out the reaction L-arginine + H2O = L-citrulline + NH4(+). Its pathway is amino-acid degradation; L-arginine degradation via ADI pathway; carbamoyl phosphate from L-arginine: step 1/2. The chain is Arginine deiminase from Borrelia duttonii (strain Ly).